The following is a 152-amino-acid chain: Large ribosomal subunit protein uL15 (152 aa).

The disordered stretch occupies residues 1–56 (MELNTLKPAKNSVKQNTRYGRGQGSGKGGTSTRGHKGAKSRSGYKSKPGFEGGQLP). Residues 21–31 (RGQGSGKGGTS) show a composition bias toward gly residues. Residues 33-44 (RGHKGAKSRSGY) show a composition bias toward basic residues.

This sequence belongs to the universal ribosomal protein uL15 family. In terms of assembly, part of the 50S ribosomal subunit.

In terms of biological role, binds to the 23S rRNA. The chain is Large ribosomal subunit protein uL15 from Amoebophilus asiaticus (strain 5a2).